The following is a 1697-amino-acid chain: UDP-sugar-dependent glycosyltransferase 52 (1697 aa).

2 disordered regions span residues 20-40 (HSDS…NYEN) and 142-166 (STDL…LMIP). The region spanning 234-332 (DYVLENYLYK…WYHEINRMQK (99 aa)) is the PH domain. Disordered regions lie at residues 573–645 (FRSK…TTHE) and 707–756 (PLDK…KQSQ). 2 stretches are compositionally biased toward low complexity: residues 584 to 628 (QNSQ…SSSA) and 711 to 722 (QQQQQQQQQQQQ). 2 consecutive GRAM domains span residues 658-793 (STFH…TKER) and 881-948 (IKIK…KKYS). The segment covering 739 to 749 (TDSDTDSESDF) has biased composition (acidic residues). Disordered regions lie at residues 1011-1047 (SPSI…IHST), 1062-1085 (DGEN…SNSF), 1110-1130 (SAQQ…STTT), and 1466-1488 (EHNN…SNKS). 4 stretches are compositionally biased toward low complexity: residues 1026–1047 (PPSS…IHST), 1065–1084 (NNSN…KSNS), 1112–1130 (QQQQ…STTT), and 1469–1479 (NNNNNNNNNNN). The FYVE-type zinc-finger motif lies at 1622–1685 (SSAPNSCMGC…VCDKCFNDLQ (64 aa)). Cys-1628, Cys-1631, Cys-1647, Cys-1650, Cys-1655, Cys-1658, Cys-1677, and Cys-1680 together coordinate Zn(2+).

This sequence belongs to the glycosyltransferase 28 family.

It catalyses the reaction a sterol + UDP-alpha-D-glucose = a sterol 3-beta-D-glucoside + UDP + H(+). Its function is as follows. Involved in the biosynthesis of sterol glucoside. Can use different sterols such as cholesterol, sitosterol, and ergosterol as sugar acceptors. The chain is UDP-sugar-dependent glycosyltransferase 52 (ugt52) from Dictyostelium discoideum (Social amoeba).